We begin with the raw amino-acid sequence, 313 residues long: Porphobilinogen deaminase (313 aa).

S-(dipyrrolylmethanemethyl)cysteine is present on cysteine 240.

It belongs to the HMBS family. Monomer. The cofactor is dipyrromethane.

It carries out the reaction 4 porphobilinogen + H2O = hydroxymethylbilane + 4 NH4(+). Its pathway is porphyrin-containing compound metabolism; protoporphyrin-IX biosynthesis; coproporphyrinogen-III from 5-aminolevulinate: step 2/4. In terms of biological role, tetrapolymerization of the monopyrrole PBG into the hydroxymethylbilane pre-uroporphyrinogen in several discrete steps. The protein is Porphobilinogen deaminase of Moorella thermoacetica (strain ATCC 39073 / JCM 9320).